Here is a 262-residue protein sequence, read N- to C-terminus: uncharacterized protein (262 aa).

Belongs to the BtpA family.

This is an uncharacterized protein from Pyrococcus furiosus (strain ATCC 43587 / DSM 3638 / JCM 8422 / Vc1).